Reading from the N-terminus, the 384-residue chain is Deoxyguanosinetriphosphate triphosphohydrolase-like protein (384 aa).

In terms of domain architecture, HD spans 62 to 198; the sequence is RLTHSLEVST…AALADDISYI (137 aa).

Belongs to the dGTPase family. Type 2 subfamily.

The protein is Deoxyguanosinetriphosphate triphosphohydrolase-like protein of Rickettsia rickettsii (strain Iowa).